A 488-amino-acid chain; its full sequence is GTPase Der (488 aa).

EngA-type G domains follow at residues P3 to M166 and I199 to T372. Residues G9 to S16, D56 to I60, N118 to D121, G205 to S212, D252 to V256, and N317 to D320 each bind GTP. A KH-like domain is found at R373–D457. A disordered region spans residues F460–K488. Basic residues predominate over residues R473–K488.

It belongs to the TRAFAC class TrmE-Era-EngA-EngB-Septin-like GTPase superfamily. EngA (Der) GTPase family. In terms of assembly, associates with the 50S ribosomal subunit.

Functionally, GTPase that plays an essential role in the late steps of ribosome biogenesis. The sequence is that of GTPase Der from Shewanella baltica (strain OS223).